The following is a 323-amino-acid chain: Aldo-keto reductase family 1 member C1 (323 aa).

NADP(+) contacts are provided by residues 20-24 and D50; that span reads GFGTY. Y24 lines the substrate pocket. Catalysis depends on Y55, which acts as the Proton donor. H117 lines the substrate pocket. NADP(+) contacts are provided by residues 166–167, Q190, and 216–222; these read SN and YSALGSH. Substrate contacts are provided by H222 and W227. 270–280 contributes to the NADP(+) binding site; the sequence is KSYNEQRIRQN.

The protein belongs to the aldo/keto reductase family. As to quaternary structure, monomer. In terms of tissue distribution, expressed in all tissues tested including liver, prostate, testis, adrenal gland, brain, uterus, mammary gland and keratinocytes. Highest levels found in liver, mammary gland and brain.

The protein localises to the cytoplasm. It localises to the cytosol. It catalyses the reaction a 3alpha-hydroxysteroid + NADP(+) = a 3-oxosteroid + NADPH + H(+). The enzyme catalyses a 3alpha-hydroxysteroid + NAD(+) = a 3-oxosteroid + NADH + H(+). It carries out the reaction (17R,20S)-17,20-dihydroxypregn-4-en-3-one + NADP(+) = 17alpha-hydroxyprogesterone + NADPH + H(+). The catalysed reaction is (17R,20S)-17,20-dihydroxypregn-4-en-3-one + NAD(+) = 17alpha-hydroxyprogesterone + NADH + H(+). It catalyses the reaction (20S)-hydroxypregn-4-en-3-one + NADP(+) = progesterone + NADPH + H(+). The enzyme catalyses (20S)-hydroxypregn-4-en-3-one + NAD(+) = progesterone + NADH + H(+). It carries out the reaction (1R,2R)-1,2-dihydrobenzene-1,2-diol + NADP(+) = catechol + NADPH + H(+). The catalysed reaction is (S)-indan-1-ol + NAD(+) = indan-1-one + NADH + H(+). It catalyses the reaction (S)-indan-1-ol + NADP(+) = indan-1-one + NADPH + H(+). The enzyme catalyses 5alpha-androstane-3alpha,17beta-diol + NADP(+) = 17beta-hydroxy-5alpha-androstan-3-one + NADPH + H(+). It carries out the reaction 5alpha-androstane-3beta,17beta-diol + NADP(+) = 17beta-hydroxy-5alpha-androstan-3-one + NADPH + H(+). The catalysed reaction is 5alpha-androstane-3alpha,17beta-diol + NAD(+) = 17beta-hydroxy-5alpha-androstan-3-one + NADH + H(+). It catalyses the reaction 17beta-hydroxy-5alpha-androstan-3-one + NADP(+) = 5alpha-androstan-3,17-dione + NADPH + H(+). The enzyme catalyses androsterone + NADP(+) = 5alpha-androstan-3,17-dione + NADPH + H(+). It carries out the reaction androsterone + NADPH + H(+) = 5alpha-androstane-3alpha,17beta-diol + NADP(+). The catalysed reaction is 5alpha-androstane-3alpha,17beta-diol + NAD(+) = androsterone + NADH + H(+). It catalyses the reaction 17beta-estradiol + NADP(+) = estrone + NADPH + H(+). The enzyme catalyses 17beta-estradiol + NAD(+) = estrone + NADH + H(+). It carries out the reaction testosterone + NADP(+) = androst-4-ene-3,17-dione + NADPH + H(+). The catalysed reaction is 20alpha-hydroxy-5beta-pregnan-3-one + NADP(+) = 5beta-pregnan-3,20-dione + NADPH + H(+). It catalyses the reaction 3beta-hydroxy-5beta-pregnane-20-one + NADP(+) = 5beta-pregnan-3,20-dione + NADPH + H(+). The enzyme catalyses 3beta-hydroxy-5beta-pregnane-20-one + NADPH + H(+) = 3beta,20alpha-dihydroxy-5beta-pregnane + NADP(+). It carries out the reaction (3beta,5alpha,17beta)-3-hydroxyandrostan-17-yl sulfate + NADP(+) = 5alpha-dihydrotestosterone sulfate + NADPH + H(+). It participates in steroid metabolism. Inhibited by hexestrol with an IC(50) of 9.5 uM, 1,10-phenanthroline with an IC(50) of 55 uM, 1,7-phenanthroline with an IC(50) of 72 uM, flufenamic acid with an IC(50) of 6.0 uM, indomethacin with an IC(50) of 140 uM, ibuprofen with an IC(50) of 950 uM, lithocholic acid with an IC(50) of 25 uM, ursodeoxycholic acid with an IC(50) of 340 uM and chenodeoxycholic acid with an IC(50) of 570 uM. The oxidation reaction is inhibited by low micromolar concentrations of NADPH. Cytosolic aldo-keto reductase that catalyzes the NADH and NADPH-dependent reduction of ketosteroids to hydroxysteroids. Most probably acts as a reductase in vivo since the oxidase activity measured in vitro is inhibited by physiological concentrations of NADPH. Displays a broad positional specificity acting on positions 3, 17 and 20 of steroids and regulates the metabolism of hormones like estrogens and androgens. May also reduce conjugated steroids such as 5alpha-dihydrotestosterone sulfate. Displays affinity for bile acids. The protein is Aldo-keto reductase family 1 member C1 (AKR1C1) of Homo sapiens (Human).